The following is a 320-amino-acid chain: Glutathione synthetase (320 aa).

The region spanning 133 to 317 (KMYTLQFAAV…LGEKVICWLE (185 aa)) is the ATP-grasp domain. An ATP-binding site is contributed by 159-215 (LEEHGAAVLKPLGGKAGEGILFLDPGDRNFNSLVEISTQHGKEPVMVQRFLPEAKEG). Mg(2+)-binding residues include Glu-288 and Asn-290.

It belongs to the prokaryotic GSH synthase family. Requires Mg(2+) as cofactor. Mn(2+) serves as cofactor.

It catalyses the reaction gamma-L-glutamyl-L-cysteine + glycine + ATP = glutathione + ADP + phosphate + H(+). It participates in sulfur metabolism; glutathione biosynthesis; glutathione from L-cysteine and L-glutamate: step 2/2. The sequence is that of Glutathione synthetase from Synechocystis sp. (strain ATCC 27184 / PCC 6803 / Kazusa).